The sequence spans 145 residues: Secreted RxLR effector protein PSE1 (145 aa).

Residues 1 to 21 (MRLSSFIVVGAAVVNLLTSGS) form the signal peptide. Positions 53-73 (RLLRYHSNNNRGGDEDIAEER) match the RxLR-dEER motif.

This sequence belongs to the RxLR effector family.

The protein localises to the secreted. The protein resides in the host cell. Secreted effector that impairs both plant effector-triggered immunity and pathogen-associated molecular patterns (PAMP)-triggered immunity (PTI). Suppresses plant cell death as a part of the plant defense responses. Facilitates plant infection by altering the auxin content at the roots penetration points of the of the pathogen. The polypeptide is Secreted RxLR effector protein PSE1 (Phytophthora nicotianae (Potato buckeye rot agent)).